The sequence spans 220 residues: Charged multivesicular body protein 4b (220 aa).

Disordered regions lie at residues 1–22 (MSLF…SPQE) and 180–220 (EIGD…WAAN). 2 coiled-coil regions span residues 21-88 (QEAI…STIE) and 123-181 (IDKV…LLEI).

It belongs to the SNF7 family. Probable core component of the endosomal sorting required for transport complex III (ESCRT-III). ESCRT-III components are thought to multimerize to form a flat lattice on the perimeter membrane of the endosome.

It is found in the cytoplasm. The protein resides in the cytosol. It localises to the late endosome membrane. Its subcellular location is the midbody. Probable core component of the endosomal sorting required for transport complex III (ESCRT-III) which is involved in multivesicular bodies (MVBs) formation and sorting of endosomal cargo proteins into MVBs. MVBs contain intraluminal vesicles (ILVs) that are generated by invagination and scission from the limiting membrane of the endosome and mostly are delivered to lysosomes enabling degradation of membrane proteins, such as stimulated growth factor receptors, lysosomal enzymes and lipids. The polypeptide is Charged multivesicular body protein 4b (chmp4b) (Danio rerio (Zebrafish)).